A 412-amino-acid chain; its full sequence is L-cysteine:1D-myo-inositol 2-amino-2-deoxy-alpha-D-glucopyranoside ligase (412 aa).

A Zn(2+)-binding site is contributed by Cys43. L-cysteinyl-5'-AMP contacts are provided by residues 43–46 (CGIT), Thr58, and 81–83 (NVT). The short motif at 45–55 (ITPYDATHLGH) is the 'HIGH' region element. The 'ERGGDP' region signature appears at 187–192 (ERGGDP). Trp227 serves as a coordination point for L-cysteinyl-5'-AMP. Cys231 is a Zn(2+) binding site. Residue 249-251 (GSD) coordinates L-cysteinyl-5'-AMP. His256 contacts Zn(2+). Ile283 contributes to the L-cysteinyl-5'-AMP binding site. The 'KMSKS' region signature appears at 289–293 (KMSKS).

It belongs to the class-I aminoacyl-tRNA synthetase family. MshC subfamily. As to quaternary structure, monomer. It depends on Zn(2+) as a cofactor.

It carries out the reaction 1D-myo-inositol 2-amino-2-deoxy-alpha-D-glucopyranoside + L-cysteine + ATP = 1D-myo-inositol 2-(L-cysteinylamino)-2-deoxy-alpha-D-glucopyranoside + AMP + diphosphate + H(+). In terms of biological role, catalyzes the ATP-dependent condensation of GlcN-Ins and L-cysteine to form L-Cys-GlcN-Ins. This Saccharopolyspora erythraea (strain ATCC 11635 / DSM 40517 / JCM 4748 / NBRC 13426 / NCIMB 8594 / NRRL 2338) protein is L-cysteine:1D-myo-inositol 2-amino-2-deoxy-alpha-D-glucopyranoside ligase.